The following is a 351-amino-acid chain: Porphobilinogen deaminase (351 aa).

Cys-242 bears the S-(dipyrrolylmethanemethyl)cysteine mark. The RPE1 insert domain occupies 257–306 (PRHLSKLAYREVLEGNTEALATAAYKSNRTDASTGLTYKLPLEVEFGKVS).

The protein belongs to the HMBS family. Monomer. Dipyrromethane serves as cofactor.

The enzyme catalyses 4 porphobilinogen + H2O = hydroxymethylbilane + 4 NH4(+). It functions in the pathway porphyrin-containing compound metabolism; protoporphyrin-IX biosynthesis; coproporphyrinogen-III from 5-aminolevulinate: step 2/4. Tetrapolymerization of the monopyrrole PBG into the hydroxymethylbilane pre-uroporphyrinogen in several discrete steps. The polypeptide is Porphobilinogen deaminase (Rickettsia conorii (strain ATCC VR-613 / Malish 7)).